The primary structure comprises 285 residues: Bifunctional protein FolD (285 aa).

NADP(+) is bound by residues Gly-166–Ser-168 and Ile-232.

The protein belongs to the tetrahydrofolate dehydrogenase/cyclohydrolase family. As to quaternary structure, homodimer.

The enzyme catalyses (6R)-5,10-methylene-5,6,7,8-tetrahydrofolate + NADP(+) = (6R)-5,10-methenyltetrahydrofolate + NADPH. The catalysed reaction is (6R)-5,10-methenyltetrahydrofolate + H2O = (6R)-10-formyltetrahydrofolate + H(+). The protein operates within one-carbon metabolism; tetrahydrofolate interconversion. With respect to regulation, the NAD(+)-dependent dehydrogenase is activated by inorganic phosphate. Functionally, catalyzes the oxidation of 5,10-methylenetetrahydrofolate to 5,10-methenyltetrahydrofolate and then the hydrolysis of 5,10-methenyltetrahydrofolate to 10-formyltetrahydrofolate. The protein is Bifunctional protein FolD of Photobacterium phosphoreum.